The chain runs to 308 residues: MENKIAPFSYSGSSAGNSSSGGVVSSSLYSDQLYKSTRNIMQQRQDMVNREALCYTRLHEASLEAEALRLENTELRSMNLRLKNELNSLIRSSIQNRFDHRSPLRMLSNLSIGGNDADEVENQNRTVNRDDVNDKSPTSVMENEDLNRSSLPKSISVRSNGYSKASQGGGGAAAQSGKPRGTVTKPGTCGQVSTTQKVYVRGGGKKEDQEEEIEVEVYNQGMTKTELCNKWQETGTCPYGDHCQFAHGIKELRPVIRHPRYKTEVCRMVLAGDNCPYGHRCHFRHSLSEQEKLVAAGFKPKSSLKLIT.

The segment at 1-21 (MENKIAPFSYSGSSAGNSSSG) is disordered. A compositionally biased stretch (low complexity) spans 9–21 (SYSGSSAGNSSSG). Residues 56–91 (TRLHEASLEAEALRLENTELRSMNLRLKNELNSLIR) are a coiled coil. The tract at residues 110-190 (LSIGGNDADE…GTVTKPGTCG (81 aa)) is disordered. At serine 111 the chain carries Phosphoserine. Polar residues predominate over residues 148-164 (RSSLPKSISVRSNGYSK). 2 C3H1-type zinc fingers span residues 222–250 (MTKT…HGIK) and 260–288 (RYKT…HSLS).

In terms of processing, phosphorylated at Ser-111 by ASK7/BIN2 in the cytoplasm in the absence of brassinosteroids (BRs). As to expression, highly expressed in secondary cell wall-forming tissues and the xylem cells of roots. Expressed predominantly in inflorescence stems, flowers and siliques. Highly expressed in the basal portion of stems, where cells are undergoing secondary cell wall thickening. Highly expressed in meiocytes and tapetum from anthers.

The protein resides in the cytoplasm. It localises to the nucleus. Its function is as follows. Functions probably as a transcriptional factor that activates genes involved in secondary cell wall biosynthesis. Functions redudantly with C3H14 to regulate secondary cell wall formation. C3H14 and C3H15 have overlapping roles in the regulation of secondary cell wall formation and anther development. C3H14 may contribute more to secondary cell wall thickening while C3H15 could be more important in anther development. May regulate at both the transcriptional and post-transcriptional levels the expression of many genes involved in various biological processes, particularly those associated with cell wall metabolism and pollen development. Involved in the regulation of callose metabolism in male meiocytes, in integrity of newly formed microspores, and promotes male fertility. May be involved in the regulation of the callose synthesis genes CALS5 and CALS12, the potential degradation of callose walls-related genes A6 and MYB80, as well as other putative beta-1,3-glucanase genes. Negatively regulates cell elongation by inhibiting brassinosteroid (BR) signaling. Functions downstream of the BRI1 receptor as a negative regulator in the BR pathway. This is Zinc finger CCCH domain-containing protein 15 from Arabidopsis thaliana (Mouse-ear cress).